We begin with the raw amino-acid sequence, 263 residues long: Pimeloyl-[acyl-carrier protein] methyl ester esterase (263 aa).

Residues Trp23, 90–91 (SL), and 152–156 (FLTLQ) each bind substrate. Ser90 serves as the catalytic Nucleophile. Active-site residues include Asp216 and His244. A substrate-binding site is contributed by His244.

Belongs to the AB hydrolase superfamily. Carboxylesterase BioH family. In terms of assembly, monomer.

It is found in the cytoplasm. The catalysed reaction is 6-carboxyhexanoyl-[ACP] methyl ester + H2O = 6-carboxyhexanoyl-[ACP] + methanol + H(+). It functions in the pathway cofactor biosynthesis; biotin biosynthesis. Its function is as follows. The physiological role of BioH is to remove the methyl group introduced by BioC when the pimeloyl moiety is complete. It allows to synthesize pimeloyl-ACP via the fatty acid synthetic pathway through the hydrolysis of the ester bonds of pimeloyl-ACP esters. The sequence is that of Pimeloyl-[acyl-carrier protein] methyl ester esterase from Nitrosospira multiformis (strain ATCC 25196 / NCIMB 11849 / C 71).